Here is a 932-residue protein sequence, read N- to C-terminus: Protein translocase subunit SecA (932 aa).

ATP is bound by residues Gln-87, 105–109, and Asp-515; that span reads GEGKT. Zn(2+) is bound by residues Cys-916, Cys-918, Cys-927, and His-928.

This sequence belongs to the SecA family. In terms of assembly, monomer and homodimer. Part of the essential Sec protein translocation apparatus which comprises SecA, SecYEG and auxiliary proteins SecDF-YajC and YidC. Requires Zn(2+) as cofactor.

It is found in the cell inner membrane. It localises to the cytoplasm. It carries out the reaction ATP + H2O + cellular proteinSide 1 = ADP + phosphate + cellular proteinSide 2.. Its function is as follows. Part of the Sec protein translocase complex. Interacts with the SecYEG preprotein conducting channel. Has a central role in coupling the hydrolysis of ATP to the transfer of proteins into and across the cell membrane, serving both as a receptor for the preprotein-SecB complex and as an ATP-driven molecular motor driving the stepwise translocation of polypeptide chains across the membrane. The sequence is that of Protein translocase subunit SecA from Burkholderia orbicola (strain MC0-3).